The following is a 149-amino-acid chain: UPF0306 protein PM1958 (149 aa).

The protein belongs to the UPF0306 family.

In Pasteurella multocida (strain Pm70), this protein is UPF0306 protein PM1958.